A 140-amino-acid polypeptide reads, in one-letter code: Myrosinase 2 (140 aa).

The active-site Nucleophile is the Arg-70. Residues Asn-114 and Asn-127 are each glycosylated (N-linked (GlcNAc...) asparagine).

Belongs to the glycosyl hydrolase 1 family. In terms of assembly, homodimer.

The catalysed reaction is a thioglucoside + H2O = a sugar + a thiol.. Inhibited by ascorbate. In terms of biological role, degradation of glucosinolates (glucose residue linked by a thioglucoside bound to an amino acid derivative) to glucose, sulfate and any of the products: thiocyanates, isothiocyanates, nitriles, epithionitriles or oxazolidine-2-thiones. This Brevicoryne brassicae (Mealy cabbage aphid) protein is Myrosinase 2.